Here is a 388-residue protein sequence, read N- to C-terminus: MSQDLLPGVTGVLALADGAILQGVGCGAVGDAVGEVCFNTAMTGYQEILTDPSYMAQIVAFTFPHVGNVGVNGEDVEQITGVAETAARGALFRDVPTVQANWRADGDFDAWMKARGVVGLAGVDTRALTRKIRETGMPHGVIAHSPDGQFDLAALVAKAKAWAGLEGLDLAKDASTTQTFTWDEGLWSWPEGYAKLDKPKYEVVVIDYGVKRNILRALAHVGARATVVPASTSAEDILARNPDGVMLSNGPGDPAATGQYAVPEIQKLVASGKPVFGICLGHQMLALALGAKTVKMEQGHHGANHPVKDLTTGKVEIVSMNHGFTVDTASLPAPVKETHVSLFDGTNAGIALDGKPVFSVQHHPEASPGPTDSLYLFERFAGLMDAAK.

Positions 1 to 198 (MSQDLLPGVT…WPEGYAKLDK (198 aa)) are CPSase. L-glutamine is bound by residues Ser-53, Gly-250, and Gly-252. Residues 202-388 (EVVVIDYGVK…RFAGLMDAAK (187 aa)) enclose the Glutamine amidotransferase type-1 domain. The Nucleophile role is filled by Cys-279. L-glutamine contacts are provided by Leu-280, Gln-283, Asn-321, Gly-323, and Phe-324. Residues His-363 and Glu-365 contribute to the active site.

Belongs to the CarA family. Composed of two chains; the small (or glutamine) chain promotes the hydrolysis of glutamine to ammonia, which is used by the large (or ammonia) chain to synthesize carbamoyl phosphate. Tetramer of heterodimers (alpha,beta)4.

The catalysed reaction is hydrogencarbonate + L-glutamine + 2 ATP + H2O = carbamoyl phosphate + L-glutamate + 2 ADP + phosphate + 2 H(+). The enzyme catalyses L-glutamine + H2O = L-glutamate + NH4(+). Its pathway is amino-acid biosynthesis; L-arginine biosynthesis; carbamoyl phosphate from bicarbonate: step 1/1. It functions in the pathway pyrimidine metabolism; UMP biosynthesis via de novo pathway; (S)-dihydroorotate from bicarbonate: step 1/3. Small subunit of the glutamine-dependent carbamoyl phosphate synthetase (CPSase). CPSase catalyzes the formation of carbamoyl phosphate from the ammonia moiety of glutamine, carbonate, and phosphate donated by ATP, constituting the first step of 2 biosynthetic pathways, one leading to arginine and/or urea and the other to pyrimidine nucleotides. The small subunit (glutamine amidotransferase) binds and cleaves glutamine to supply the large subunit with the substrate ammonia. The protein is Carbamoyl phosphate synthase small chain of Caulobacter vibrioides (strain ATCC 19089 / CIP 103742 / CB 15) (Caulobacter crescentus).